A 96-amino-acid chain; its full sequence is MIVSRLTFPLQAAKLVARKAAGNPSNSIIQRRHMSGVYFRSGALRPKPDEMPFGLFAIFCAVIPGLFIGATISKNVANFLEENDLFVPSDDDDDED.

Residues 1-34 (MIVSRLTFPLQAAKLVARKAAGNPSNSIIQRRHM) constitute a mitochondrion transit peptide. The helical transmembrane segment at 52 to 72 (PFGLFAIFCAVIPGLFIGATI) threads the bilayer.

This sequence belongs to the SMDT1/EMRE family.

The protein localises to the mitochondrion inner membrane. Its function is as follows. Essential regulatory subunit of the mitochondrial calcium uniporter (mcu) channel, a protein that mediates calcium uptake into mitochondria. This chain is Essential MCU regulator, mitochondrial, found in Drosophila pseudoobscura pseudoobscura (Fruit fly).